The following is a 230-amino-acid chain: Octanoyltransferase (230 aa).

The 178-residue stretch at 38-215 (AGGADTLLLL…AVCAALDGVL (178 aa)) folds into the BPL/LPL catalytic domain. Substrate-binding positions include 76 to 83 (RGGKITWH), 145 to 147 (AIG), and 158 to 160 (GFA). Residue C176 is the Acyl-thioester intermediate of the active site.

The protein belongs to the LipB family.

The protein localises to the cytoplasm. The catalysed reaction is octanoyl-[ACP] + L-lysyl-[protein] = N(6)-octanoyl-L-lysyl-[protein] + holo-[ACP] + H(+). The protein operates within protein modification; protein lipoylation via endogenous pathway; protein N(6)-(lipoyl)lysine from octanoyl-[acyl-carrier-protein]: step 1/2. Functionally, catalyzes the transfer of endogenously produced octanoic acid from octanoyl-acyl-carrier-protein onto the lipoyl domains of lipoate-dependent enzymes. Lipoyl-ACP can also act as a substrate although octanoyl-ACP is likely to be the physiological substrate. In Mycobacterium tuberculosis (strain ATCC 25177 / H37Ra), this protein is Octanoyltransferase.